Consider the following 426-residue polypeptide: Serine--tRNA ligase (426 aa).

233–235 (TAE) is an L-serine binding site. 264 to 266 (RSE) contacts ATP. Glutamate 287 is a binding site for L-serine. 351-354 (EISS) provides a ligand contact to ATP. Residue serine 387 participates in L-serine binding.

This sequence belongs to the class-II aminoacyl-tRNA synthetase family. Type-1 seryl-tRNA synthetase subfamily. As to quaternary structure, homodimer. The tRNA molecule binds across the dimer.

The protein localises to the cytoplasm. It catalyses the reaction tRNA(Ser) + L-serine + ATP = L-seryl-tRNA(Ser) + AMP + diphosphate + H(+). The enzyme catalyses tRNA(Sec) + L-serine + ATP = L-seryl-tRNA(Sec) + AMP + diphosphate + H(+). It functions in the pathway aminoacyl-tRNA biosynthesis; selenocysteinyl-tRNA(Sec) biosynthesis; L-seryl-tRNA(Sec) from L-serine and tRNA(Sec): step 1/1. In terms of biological role, catalyzes the attachment of serine to tRNA(Ser). Is also able to aminoacylate tRNA(Sec) with serine, to form the misacylated tRNA L-seryl-tRNA(Sec), which will be further converted into selenocysteinyl-tRNA(Sec). The chain is Serine--tRNA ligase from Ectopseudomonas mendocina (strain ymp) (Pseudomonas mendocina).